The sequence spans 427 residues: Peptidase B (427 aa).

Lys195 and Asp200 together coordinate Mn(2+). Lys207 is an active-site residue. Mn(2+) contacts are provided by Asp218, Asp277, and Glu279. The active site involves Arg281.

The protein belongs to the peptidase M17 family. In terms of assembly, homohexamer. Mn(2+) is required as a cofactor.

The protein resides in the cytoplasm. The enzyme catalyses Release of an N-terminal amino acid, Xaa, from a peptide or arylamide. Xaa is preferably Glu or Asp but may be other amino acids, including Leu, Met, His, Cys and Gln.. Its function is as follows. Probably plays an important role in intracellular peptide degradation. This Salmonella arizonae (strain ATCC BAA-731 / CDC346-86 / RSK2980) protein is Peptidase B.